The primary structure comprises 435 residues: Legumain (435 aa).

A signal peptide spans 1-17 (MTWRVAVLLSLVLGAGA). Residue asparagine 93 is glycosylated (N-linked (GlcNAc...) asparagine). Histidine 150 is a catalytic residue. Residue asparagine 169 is glycosylated (N-linked (GlcNAc...) asparagine). Cysteine 191 (nucleophile) is an active-site residue. Asparagine 265 and asparagine 274 each carry an N-linked (GlcNAc...) asparagine glycan. Positions 326 to 435 (DVKESQNLIG…AMDKVCLSHY (110 aa)) are excised as a propeptide. Disulfide bonds link cysteine 380-cysteine 414 and cysteine 392-cysteine 431.

This sequence belongs to the peptidase C13 family. In terms of assembly, homodimer before autocatalytic removal of the propeptide. Monomer after autocatalytic processing. May interact with integrins. In terms of processing, glycosylated. Post-translationally, activated by autocatalytic processing at pH 4. Detected in kidney proximal tubules (at protein level). Ubiquitous. Particularly abundant in kidney and placenta.

It localises to the lysosome. The catalysed reaction is Hydrolysis of proteins and small molecule substrates at -Asn-|-Xaa- bonds.. Its activity is regulated as follows. Inhibited by cystatin-C. Its function is as follows. Has a strict specificity for hydrolysis of asparaginyl bonds. Can also cleave aspartyl bonds slowly, especially under acidic conditions. Involved in the processing of proteins for MHC class II antigen presentation in the lysosomal/endosomal system. Also involved in MHC class I antigen presentation in cross-presenting dendritic cells by mediating cleavage and maturation of Perforin-2 (MPEG1), thereby promoting antigen translocation in the cytosol. Required for normal lysosomal protein degradation in renal proximal tubules. Required for normal degradation of internalized EGFR. Plays a role in the regulation of cell proliferation via its role in EGFR degradation. The chain is Legumain (Lgmn) from Mus musculus (Mouse).